The sequence spans 111 residues: Aspartate 1-decarboxylase (111 aa).

The active-site Schiff-base intermediate with substrate; via pyruvic acid is Ser25. Ser25 is subject to Pyruvic acid (Ser). Thr57 is a binding site for substrate. Tyr58 serves as the catalytic Proton donor. 73 to 75 (GPA) is a binding site for substrate.

The protein belongs to the PanD family. As to quaternary structure, heterooctamer of four alpha and four beta subunits. Pyruvate is required as a cofactor. Post-translationally, is synthesized initially as an inactive proenzyme, which is activated by self-cleavage at a specific serine bond to produce a beta-subunit with a hydroxyl group at its C-terminus and an alpha-subunit with a pyruvoyl group at its N-terminus.

It localises to the cytoplasm. The catalysed reaction is L-aspartate + H(+) = beta-alanine + CO2. Its pathway is cofactor biosynthesis; (R)-pantothenate biosynthesis; beta-alanine from L-aspartate: step 1/1. Functionally, catalyzes the pyruvoyl-dependent decarboxylation of aspartate to produce beta-alanine. This Coxiella burnetii (strain RSA 493 / Nine Mile phase I) protein is Aspartate 1-decarboxylase.